We begin with the raw amino-acid sequence, 501 residues long: Phenylalanine--tRNA ligase alpha subunit (501 aa).

L-phenylalanine contacts are provided by Thr340 and Phe423. Glu425 serves as a coordination point for Mg(2+). An L-phenylalanine-binding site is contributed by Phe448.

This sequence belongs to the class-II aminoacyl-tRNA synthetase family. Phe-tRNA synthetase alpha subunit type 2 subfamily. Tetramer of two alpha and two beta subunits. Mg(2+) serves as cofactor.

The protein localises to the cytoplasm. It carries out the reaction tRNA(Phe) + L-phenylalanine + ATP = L-phenylalanyl-tRNA(Phe) + AMP + diphosphate + H(+). In Methanococcus vannielii (strain ATCC 35089 / DSM 1224 / JCM 13029 / OCM 148 / SB), this protein is Phenylalanine--tRNA ligase alpha subunit.